The following is a 97-amino-acid chain: Mitochondrial import inner membrane translocase subunit Tim8 A (97 aa).

A Twin CX3C motif motif is present at residues 43–66 (CWEKCMDKPGPKLDSRAEACFVNC). 2 cysteine pairs are disulfide-bonded: C43–C66 and C47–C62. 4 positions are modified to phosphoserine: S57, S87, S94, and S96.

It belongs to the small Tim family. In terms of assembly, heterohexamer; composed of 3 copies of TIMM8A and 3 copies of TIMM13, named soluble 70 kDa complex. Associates with the TIM22 complex, whose core is composed of TIMM22. Highly expressed in fetal and adult brain, followed by fetal lung, liver and kidney. Also expressed in heart, placenta, lung, liver, kidney, pancreas, skeletal muscle and heart.

It is found in the mitochondrion inner membrane. Mitochondrial intermembrane chaperone that participates in the import and insertion of some multi-pass transmembrane proteins into the mitochondrial inner membrane. Also required for the transfer of beta-barrel precursors from the TOM complex to the sorting and assembly machinery (SAM complex) of the outer membrane. Acts as a chaperone-like protein that protects the hydrophobic precursors from aggregation and guide them through the mitochondrial intermembrane space. The TIMM8-TIMM13 complex mediates the import of proteins such as TIMM23, SLC25A12/ARALAR1 and SLC25A13/ARALAR2, while the predominant TIMM9-TIMM10 70 kDa complex mediates the import of much more proteins. Probably necessary for normal neurologic development. This chain is Mitochondrial import inner membrane translocase subunit Tim8 A (TIMM8A), found in Homo sapiens (Human).